A 417-amino-acid chain; its full sequence is NADH-quinone oxidoreductase subunit D (417 aa).

Belongs to the complex I 49 kDa subunit family. In terms of assembly, NDH-1 is composed of 14 different subunits. Subunits NuoB, C, D, E, F, and G constitute the peripheral sector of the complex.

It is found in the cell inner membrane. It carries out the reaction a quinone + NADH + 5 H(+)(in) = a quinol + NAD(+) + 4 H(+)(out). Functionally, NDH-1 shuttles electrons from NADH, via FMN and iron-sulfur (Fe-S) centers, to quinones in the respiratory chain. The immediate electron acceptor for the enzyme in this species is believed to be ubiquinone. Couples the redox reaction to proton translocation (for every two electrons transferred, four hydrogen ions are translocated across the cytoplasmic membrane), and thus conserves the redox energy in a proton gradient. The sequence is that of NADH-quinone oxidoreductase subunit D from Coxiella burnetii (strain Dugway 5J108-111).